Reading from the N-terminus, the 303-residue chain is Glycine--tRNA ligase alpha subunit (303 aa).

Belongs to the class-II aminoacyl-tRNA synthetase family. In terms of assembly, tetramer of two alpha and two beta subunits.

The protein localises to the cytoplasm. It catalyses the reaction tRNA(Gly) + glycine + ATP = glycyl-tRNA(Gly) + AMP + diphosphate. In Methylobacterium radiotolerans (strain ATCC 27329 / DSM 1819 / JCM 2831 / NBRC 15690 / NCIMB 10815 / 0-1), this protein is Glycine--tRNA ligase alpha subunit.